The primary structure comprises 562 residues: Adenylate kinase isoenzyme 5 (562 aa).

2 adenylate kinase regions span residues K133 to D316 and K377 to D559. G142 to T147 is an ATP binding site. The NMP 1 stretch occupies residues S162–A193. Residues R168, E191–A193, G219–R222, and Q226 each bind AMP. The tract at residues K256 to D266 is LID 1. Residue R257 coordinates ATP. AMP-binding residues include R263 and R274. G386–T391 serves as a coordination point for ATP. The NMP 2 stretch occupies residues S406–V435. Residues T407, R412, D433–V435, G462–R465, and Q469 each bind AMP. Positions Q499–D509 are LID 2. An ATP-binding site is contributed by R500. R517 is a binding site for AMP. Residue G545 participates in ATP binding.

The protein belongs to the adenylate kinase family. In terms of assembly, monomer. Interacts with YWHAZ. In terms of tissue distribution, brain specific.

It localises to the cytoplasm. It catalyses the reaction AMP + ATP = 2 ADP. The catalysed reaction is a 2'-deoxyribonucleoside 5'-diphosphate + ATP = a 2'-deoxyribonucleoside 5'-triphosphate + ADP. It carries out the reaction a ribonucleoside 5'-diphosphate + ATP = a ribonucleoside 5'-triphosphate + ADP. Nucleoside monophosphate (NMP) kinase that catalyzes the reversible transfer of the terminal phosphate group between nucleoside triphosphates and monophosphates. Active on AMP and dAMP with ATP as a donor. When GTP is used as phosphate donor, the enzyme phosphorylates AMP, CMP, and to a small extent dCMP. Also displays broad nucleoside diphosphate kinase activity. This Homo sapiens (Human) protein is Adenylate kinase isoenzyme 5 (AK5).